The chain runs to 564 residues: Type 2 DNA topoisomerase 6 subunit B (564 aa).

ATP-binding positions include asparagine 46, aspartate 78, 99-100 (TK), 109-116 (GQQGIGIS), and lysine 471.

The protein belongs to the TOP6B family. Homodimer. Heterotetramer of two Top6A and two Top6B chains.

The enzyme catalyses ATP-dependent breakage, passage and rejoining of double-stranded DNA.. Its function is as follows. Relaxes both positive and negative superturns and exhibits a strong decatenase activity. This is Type 2 DNA topoisomerase 6 subunit B from Pyrococcus horikoshii (strain ATCC 700860 / DSM 12428 / JCM 9974 / NBRC 100139 / OT-3).